The primary structure comprises 198 residues: ATP-dependent Clp protease proteolytic subunit 2 (198 aa).

Serine 101 acts as the Nucleophile in catalysis. The active site involves histidine 126.

It belongs to the peptidase S14 family. Fourteen ClpP subunits assemble into 2 heptameric rings which stack back to back to give a disk-like structure with a central cavity, resembling the structure of eukaryotic proteasomes.

It is found in the cytoplasm. It catalyses the reaction Hydrolysis of proteins to small peptides in the presence of ATP and magnesium. alpha-casein is the usual test substrate. In the absence of ATP, only oligopeptides shorter than five residues are hydrolyzed (such as succinyl-Leu-Tyr-|-NHMec, and Leu-Tyr-Leu-|-Tyr-Trp, in which cleavage of the -Tyr-|-Leu- and -Tyr-|-Trp bonds also occurs).. Its function is as follows. Cleaves peptides in various proteins in a process that requires ATP hydrolysis. Has a chymotrypsin-like activity. Plays a major role in the degradation of misfolded proteins. The sequence is that of ATP-dependent Clp protease proteolytic subunit 2 from Thermosynechococcus vestitus (strain NIES-2133 / IAM M-273 / BP-1).